We begin with the raw amino-acid sequence, 453 residues long: uncharacterized protein (453 aa).

Residues Cys-74, Cys-80, Cys-83, and Cys-162 each coordinate [4Fe-4S] cluster. Positions 286, 315, 336, and 384 each coordinate S-adenosyl-L-methionine. Cys-411 functions as the Nucleophile in the catalytic mechanism.

Belongs to the class I-like SAM-binding methyltransferase superfamily. RNA M5U methyltransferase family.

This is an uncharacterized protein from Staphylococcus aureus (strain MRSA252).